Here is a 352-residue protein sequence, read N- to C-terminus: MTETVTVSELAEGLGAELVGKPTRVIRRVATLCDAGPDAIGFCSNANYLEDLRATGAGAVIVRAEHVAECPTTALVVDDPYYAYAAVATRLHPAERPPAGVHPTAVVAEGVTLGEAVSVGPHAVVEAGARLGARTIVGPGCHVGTGVEIGEDSHLMGRVTVADRCVVGCRVILHPGVVVGADGFGFAKGPGKAGWRKVPQLGRVILGDDVDLGANTTVDRGAIDDTVLEEGVKLDNQVHIGHNVRVGARTIIAGNTVVAGSTTIGCDCMIGGSSAITGHISIADGVILMGMTGVTGSIKQPGAYASPLPAKPVREWRRNSVRFTQLDDLFRRVKRLEAAQSTGEGDGGDDGD.

His242 functions as the Proton acceptor in the catalytic mechanism.

Belongs to the transferase hexapeptide repeat family. LpxD subfamily. In terms of assembly, homotrimer.

The enzyme catalyses a UDP-3-O-[(3R)-3-hydroxyacyl]-alpha-D-glucosamine + a (3R)-hydroxyacyl-[ACP] = a UDP-2-N,3-O-bis[(3R)-3-hydroxyacyl]-alpha-D-glucosamine + holo-[ACP] + H(+). The protein operates within bacterial outer membrane biogenesis; LPS lipid A biosynthesis. Catalyzes the N-acylation of UDP-3-O-acylglucosamine using 3-hydroxyacyl-ACP as the acyl donor. Is involved in the biosynthesis of lipid A, a phosphorylated glycolipid that anchors the lipopolysaccharide to the outer membrane of the cell. This is UDP-3-O-acylglucosamine N-acyltransferase from Alkalilimnicola ehrlichii (strain ATCC BAA-1101 / DSM 17681 / MLHE-1).